The following is a 598-amino-acid chain: MDNVRNFAIIAHIDHGKSTLADRLIEECNGLEAREMTNQVLDSMDIERERGITIKAQTVRLNYTANDGNRYCLNLMDTPGHVDFSYEVSRSLAACEGSLLVIDSSQGVEAQTLANVYKAIDNNHEIIVVLNKVDLPASDPERVKLQVEEIIGIGSSESILISAKTGLGIRDVLEAIITKLPAPQGNINAPLQAILVDSWYDPYLGVVILVRVKNGVLKKGMKIVMMSNNAVYQVDNIGIFTPKKVMTSELSAGEVGFITASMRKMADCKVGDTITEEKKPCGEALPGFKEIHPVVFCSIFPNKTDGFKYLREALEKLHLNDTSFTFEAETSNALGYGFRCGFLGMLHLEVIQERLEREFDLDLTATAPSVIYEVTTQSGETLNIHNPNDMPDSVKIKIVEEPWITATIMVPDQYLGEILSLCDERRGKQEDLSYVGNTMTALLKYKLPLSEVVLDFYDRLKSISKGYASLDWEISNYQESQIDKLSFLVNGEPVDALACIVHKSRSEKRGREICARLRDLIPRQQYKIAIQATVGGKIVARETINPYRKDVTAKLYGGDVTRKMKLLEKQKKGKKRLYSVGNVDIPHNAFIQALKIGD.

The region spanning 2–184 is the tr-type G domain; it reads DNVRNFAIIA…AIITKLPAPQ (183 aa). GTP-binding positions include 14 to 19 and 131 to 134; these read DHGKST and NKVD.

The protein belongs to the TRAFAC class translation factor GTPase superfamily. Classic translation factor GTPase family. LepA subfamily.

It localises to the cell membrane. The enzyme catalyses GTP + H2O = GDP + phosphate + H(+). Its function is as follows. Required for accurate and efficient protein synthesis under certain stress conditions. May act as a fidelity factor of the translation reaction, by catalyzing a one-codon backward translocation of tRNAs on improperly translocated ribosomes. Back-translocation proceeds from a post-translocation (POST) complex to a pre-translocation (PRE) complex, thus giving elongation factor G a second chance to translocate the tRNAs correctly. Binds to ribosomes in a GTP-dependent manner. The sequence is that of Elongation factor 4 from Wolbachia sp. subsp. Brugia malayi (strain TRS).